Consider the following 148-residue polypeptide: Small ribosomal subunit protein bS16 (148 aa).

The interval 106 to 148 (QAAARAAAGAEDRPATTPKKAKKSGSAEEAEAAPATDAPAAGQ) is disordered. Low complexity predominate over residues 137–148 (AAPATDAPAAGQ).

It belongs to the bacterial ribosomal protein bS16 family.

The sequence is that of Small ribosomal subunit protein bS16 from Frankia casuarinae (strain DSM 45818 / CECT 9043 / HFP020203 / CcI3).